A 126-amino-acid chain; its full sequence is MSQVESPIKIKVDTQYLEQQSDVADNKYLFSYTITIINLGDNKVTLKDRHWIITDADGEQNEVKGPGVVGETPTIAPNTAYQYTSGTVMETPVGFMQGSYGMENHKGERFVATIPPFRLAVPGIFQ.

The region spanning 2 to 126 (SQVESPIKIK…FRLAVPGIFQ (125 aa)) is the ApaG domain.

The sequence is that of Protein ApaG from Shewanella frigidimarina (strain NCIMB 400).